The chain runs to 337 residues: MKIYYDTDVNTDILKGKKIAIIGYGSQGHAHANNLKDSGFDVIVGVRKGKSWEKAENAGLTVMTVADASKMADIIMILTPDELQADLYKNEIEPNIKKGAFLAFAHGFNIHFGQIVPSSDINIFMVAPKGPGHLVRSEYLKGMGVPCLMAVHQDPSGITKDVALAYAVGIGGGRAGIIETTFKDETETDLFGEQVVLCGGLTALITAAYETLVEAGYPPELAYFECLHEVKLIADLIYEGGISTMRYSISNTAQYGDLTRGPRVINSSVKAEMKKILNEIQSGQFAKEWILECKVGKPTFNALTKQGEEHPIEKVGEKLRAMMPWLKSSKLVDKSKA.

A KARI N-terminal Rossmann domain is found at 1–180 (MKIYYDTDVN…GGGRAGIIET (180 aa)). Residues 24-27 (YGSQ), Arg-47, Ser-51, and 81-84 (DELQ) contribute to the NADP(+) site. His-106 is a catalytic residue. Gly-132 contacts NADP(+). One can recognise a KARI C-terminal knotted domain in the interval 181-326 (TFKDETETDL…EKLRAMMPWL (146 aa)). Residues Asp-189, Glu-193, Glu-225, and Glu-229 each coordinate Mg(2+). Residue Ser-250 participates in substrate binding.

The protein belongs to the ketol-acid reductoisomerase family. Mg(2+) is required as a cofactor.

It catalyses the reaction (2R)-2,3-dihydroxy-3-methylbutanoate + NADP(+) = (2S)-2-acetolactate + NADPH + H(+). The catalysed reaction is (2R,3R)-2,3-dihydroxy-3-methylpentanoate + NADP(+) = (S)-2-ethyl-2-hydroxy-3-oxobutanoate + NADPH + H(+). The protein operates within amino-acid biosynthesis; L-isoleucine biosynthesis; L-isoleucine from 2-oxobutanoate: step 2/4. Its pathway is amino-acid biosynthesis; L-valine biosynthesis; L-valine from pyruvate: step 2/4. Its function is as follows. Involved in the biosynthesis of branched-chain amino acids (BCAA). Catalyzes an alkyl-migration followed by a ketol-acid reduction of (S)-2-acetolactate (S2AL) to yield (R)-2,3-dihydroxy-isovalerate. In the isomerase reaction, S2AL is rearranged via a Mg-dependent methyl migration to produce 3-hydroxy-3-methyl-2-ketobutyrate (HMKB). In the reductase reaction, this 2-ketoacid undergoes a metal-dependent reduction by NADPH to yield (R)-2,3-dihydroxy-isovalerate. The polypeptide is Ketol-acid reductoisomerase (NADP(+)) (Thermodesulfovibrio yellowstonii (strain ATCC 51303 / DSM 11347 / YP87)).